The sequence spans 971 residues: Exportin-2 (971 aa).

Met-1 is modified (N-acetylmethionine). One can recognise an Importin N-terminal domain in the interval 29–102; the sequence is AEKFLESVEG…KANIVHLMLS (74 aa). Ser-112 is subject to Phosphoserine. N6-acetyllysine is present on residues Lys-574 and Lys-824. Ser-931 carries the post-translational modification Phosphoserine.

It belongs to the XPO2/CSE1 family. Found in a complex with CSE1L/XPO2, Ran and KPNA2. Binds with high affinity to importin-alpha only in the presence of RanGTP. The complex is dissociated by the combined action of RanBP1 and RanGAP1. Interacts with CFTR.

It localises to the cytoplasm. The protein localises to the nucleus. In terms of biological role, export receptor for importin-alpha. Mediates importin-alpha re-export from the nucleus to the cytoplasm after import substrates (cargos) have been released into the nucleoplasm. In the nucleus binds cooperatively to importin-alpha and to the GTPase Ran in its active GTP-bound form. Docking of this trimeric complex to the nuclear pore complex (NPC) is mediated through binding to nucleoporins. Upon transit of a nuclear export complex into the cytoplasm, disassembling of the complex and hydrolysis of Ran-GTP to Ran-GDP (induced by RANBP1 and RANGAP1, respectively) cause release of the importin-alpha from the export receptor. CSE1L/XPO2 then return to the nuclear compartment and mediate another round of transport. The directionality of nuclear export is thought to be conferred by an asymmetric distribution of the GTP- and GDP-bound forms of Ran between the cytoplasm and nucleus. In Bos taurus (Bovine), this protein is Exportin-2 (CSE1L).